The chain runs to 493 residues: ATP synthase subunit beta, chloroplastic (493 aa).

170-177 (GGAGVGKT) contributes to the ATP binding site.

The protein belongs to the ATPase alpha/beta chains family. As to quaternary structure, F-type ATPases have 2 components, CF(1) - the catalytic core - and CF(0) - the membrane proton channel. CF(1) has five subunits: alpha(3), beta(3), gamma(1), delta(1), epsilon(1). CF(0) has four main subunits: a(1), b(1), b'(1) and c(9-12).

The protein localises to the plastid. It is found in the chloroplast thylakoid membrane. It carries out the reaction ATP + H2O + 4 H(+)(in) = ADP + phosphate + 5 H(+)(out). In terms of biological role, produces ATP from ADP in the presence of a proton gradient across the membrane. The catalytic sites are hosted primarily by the beta subunits. In Staurastrum punctulatum (Green alga), this protein is ATP synthase subunit beta, chloroplastic.